The sequence spans 278 residues: Glutamate racemase (278 aa).

Residues 25–26 and 57–58 each bind substrate; these read DS and YG. C89 serves as the catalytic Proton donor/acceptor. Residue 90–91 coordinates substrate; the sequence is NT. C204 serves as the catalytic Proton donor/acceptor. 205–206 serves as a coordination point for substrate; sequence TH.

The protein belongs to the aspartate/glutamate racemases family.

It carries out the reaction L-glutamate = D-glutamate. It participates in cell wall biogenesis; peptidoglycan biosynthesis. Provides the (R)-glutamate required for cell wall biosynthesis. The chain is Glutamate racemase from Brucella anthropi (strain ATCC 49188 / DSM 6882 / CCUG 24695 / JCM 21032 / LMG 3331 / NBRC 15819 / NCTC 12168 / Alc 37) (Ochrobactrum anthropi).